A 1403-amino-acid polypeptide reads, in one-letter code: Centrosomal protein of 162 kDa (1403 aa).

Residues 18 to 42 (KELSDDSFENSDKTARQSKKEMKKK) are disordered. S157 and S160 each carry phosphoserine. Positions 170-231 (QANAELTDDE…EKISVPKQEE (62 aa)) are disordered. The span at 208-231 (TKDEEMPSKENSKSEKISVPKQEE) shows a compositional bias: basic and acidic residues. A phosphoserine mark is found at S474 and S475. The segment at 476–504 (EEEGAVMGKQVPYKKARSAPPLLKRKPQS) is disordered. Basic residues predominate over residues 487 to 502 (PYKKARSAPPLLKRKP). 4 coiled-coil regions span residues 617–670 (KRVQ…QDNY), 698–1121 (VTGE…MLSN), 1171–1206 (EVLQ…QFEN), and 1235–1386 (CQNA…LHRQ).

It belongs to the CEP162 family. Interacts with CEP290. Interacts with CPNE4. Interacts with alpha-tubulin.

The protein localises to the cytoplasm. It is found in the cytoskeleton. Its subcellular location is the microtubule organizing center. The protein resides in the centrosome. It localises to the centriole. The protein localises to the spindle. It is found in the nucleus. In terms of biological role, required to promote assembly of the transition zone in primary cilia. Acts by specifically recognizing and binding the axonemal microtubule. Localizes to the distal ends of centrioles before ciliogenesis and directly binds to axonemal microtubule, thereby promoting and restricting transition zone formation specifically at the cilia base. Required to mediate CEP290 association with microtubules. The sequence is that of Centrosomal protein of 162 kDa (CEP162) from Homo sapiens (Human).